The chain runs to 652 residues: Forkhead box protein O1-A (652 aa).

3 disordered regions span residues 1-57 (MADA…EPSS), 208-277 (SSWW…NSHS), and 359-406 (NLLS…QQTQ). Positions 41-57 (DSNTSSPAPSVKQEPSS) are enriched in polar residues. The fork-head DNA-binding region spans 134–228 (WGNMSYADLI…KSGKSPRRRA (95 aa)). Basic residues predominate over residues 238 to 249 (AKSRGRAAKKKL). The segment covering 362–397 (SPKNPSTGGPGSGSNQSSPSSLMQASPGYSPYSSPG) has biased composition (low complexity).

Its subcellular location is the cytoplasm. It is found in the nucleus. In terms of biological role, transcription factor that regulates metabolic homeostasis in response to oxidative stress. Binds to the consensus sequence 5'-TT[G/A]TTTTG-3' and the related Daf-16 family binding element (DBE) with consensus sequence 5'-TT[G/A]TTTAC-3'. Main regulator of redox balance and osteoblast numbers and controls bone mass. Orchestrates the endocrine function of the skeleton in regulating glucose metabolism. May be involved in regulating cellular homeostasis in the eye. May act as a positive regulator of apoptosis in cardiac smooth muscle cells as a result of its transcriptional activation of pro-apoptotic genes. In Danio rerio (Zebrafish), this protein is Forkhead box protein O1-A (foxo1a).